The following is a 546-amino-acid chain: Glucose-6-phosphate isomerase (546 aa).

The Proton donor role is filled by E355. Residues H386 and K510 contribute to the active site.

Belongs to the GPI family.

The protein resides in the cytoplasm. The enzyme catalyses alpha-D-glucose 6-phosphate = beta-D-fructose 6-phosphate. It functions in the pathway carbohydrate biosynthesis; gluconeogenesis. Its pathway is carbohydrate degradation; glycolysis; D-glyceraldehyde 3-phosphate and glycerone phosphate from D-glucose: step 2/4. In terms of biological role, catalyzes the reversible isomerization of glucose-6-phosphate to fructose-6-phosphate. This Buchnera aphidicola subsp. Cinara cedri (strain Cc) protein is Glucose-6-phosphate isomerase.